Reading from the N-terminus, the 137-residue chain is Small ribosomal subunit protein uS12 (137 aa).

The disordered stretch occupies residues 1–26 (MPTINQLVTKGRKRKASKTKSPALNQ).

Belongs to the universal ribosomal protein uS12 family. Part of the 30S ribosomal subunit. Contacts proteins S8 and S17. May interact with IF1 in the 30S initiation complex.

Functionally, with S4 and S5 plays an important role in translational accuracy. In terms of biological role, interacts with and stabilizes bases of the 16S rRNA that are involved in tRNA selection in the A site and with the mRNA backbone. Located at the interface of the 30S and 50S subunits, it traverses the body of the 30S subunit contacting proteins on the other side and probably holding the rRNA structure together. The combined cluster of proteins S8, S12 and S17 appears to hold together the shoulder and platform of the 30S subunit. The sequence is that of Small ribosomal subunit protein uS12 from Mycoplasmopsis pulmonis (strain UAB CTIP) (Mycoplasma pulmonis).